The chain runs to 71 residues: uncharacterized protein (71 aa).

This is an uncharacterized protein from Spiroplasma virus 4 (SpV4).